A 429-amino-acid polypeptide reads, in one-letter code: 3-phosphoshikimate 1-carboxyvinyltransferase (429 aa).

3-phosphoshikimate is bound by residues K11, S12, and R16. K11 lines the phosphoenolpyruvate pocket. G82 and R110 together coordinate phosphoenolpyruvate. Residues S155, Q157, D302, and K329 each coordinate 3-phosphoshikimate. Q157 serves as a coordination point for phosphoenolpyruvate. The active-site Proton acceptor is the D302. Phosphoenolpyruvate contacts are provided by R333 and R385.

Belongs to the EPSP synthase family. In terms of assembly, monomer.

The protein localises to the cytoplasm. The catalysed reaction is 3-phosphoshikimate + phosphoenolpyruvate = 5-O-(1-carboxyvinyl)-3-phosphoshikimate + phosphate. The protein operates within metabolic intermediate biosynthesis; chorismate biosynthesis; chorismate from D-erythrose 4-phosphate and phosphoenolpyruvate: step 6/7. Its function is as follows. Catalyzes the transfer of the enolpyruvyl moiety of phosphoenolpyruvate (PEP) to the 5-hydroxyl of shikimate-3-phosphate (S3P) to produce enolpyruvyl shikimate-3-phosphate and inorganic phosphate. The chain is 3-phosphoshikimate 1-carboxyvinyltransferase from Helicobacter pylori (strain HPAG1).